The following is a 141-amino-acid chain: uncharacterized protein (141 aa).

The MaoC-like domain occupies 8 to 112; the sequence is IGQVFKTKSL…VLDKQPKRNE (105 aa).

This is an uncharacterized protein from Bacillus subtilis (strain 168).